The primary structure comprises 301 residues: GTP cyclohydrolase FolE2 (301 aa).

Belongs to the GTP cyclohydrolase IV family.

The enzyme catalyses GTP + H2O = 7,8-dihydroneopterin 3'-triphosphate + formate + H(+). Its pathway is cofactor biosynthesis; 7,8-dihydroneopterin triphosphate biosynthesis; 7,8-dihydroneopterin triphosphate from GTP: step 1/1. In terms of biological role, converts GTP to 7,8-dihydroneopterin triphosphate. This is GTP cyclohydrolase FolE2 from Pseudomonas syringae pv. tomato (strain ATCC BAA-871 / DC3000).